The following is a 303-amino-acid chain: Quinolinate synthase (303 aa).

Residues histidine 23 and serine 40 each contribute to the iminosuccinate site. Cysteine 85 is a [4Fe-4S] cluster binding site. Iminosuccinate is bound by residues 111 to 113 (YVN) and serine 128. Cysteine 171 contacts [4Fe-4S] cluster. Residues 197-199 (HPE) and threonine 214 each bind iminosuccinate. Residue cysteine 259 coordinates [4Fe-4S] cluster.

It belongs to the quinolinate synthase family. Type 2 subfamily. Requires [4Fe-4S] cluster as cofactor.

It localises to the cytoplasm. It carries out the reaction iminosuccinate + dihydroxyacetone phosphate = quinolinate + phosphate + 2 H2O + H(+). Its pathway is cofactor biosynthesis; NAD(+) biosynthesis; quinolinate from iminoaspartate: step 1/1. Functionally, catalyzes the condensation of iminoaspartate with dihydroxyacetone phosphate to form quinolinate. The polypeptide is Quinolinate synthase (Thermodesulfovibrio yellowstonii (strain ATCC 51303 / DSM 11347 / YP87)).